A 3175-amino-acid chain; its full sequence is MATFSATGFGGSFVRDWSLDLPDACEHGAGLCCEVDGSTLCAECFRGCEGMEQCPGLFMGLLKLASPVPVGHKFLIGWYRAAKVTGRYNFLELLQHPAFAQLRVVDARLAIEEASVFISTDHASAKRFPGARFALTPVYANAWVVSPAANSLIVTTDQEQDGFCWLKLLPPDRREAGLRLYYNHYREQRTGWLSKTGLRLWLGDLGLGINASSGGLKFHIMRGSPQRAWHITTRSCKLKSYYVCDISEADWSCLPAGNYGGYNPPGDGACGYRCLAFMNGATVVSAGCSSDLWCDDELAYRVFQLSPTFTVTIPGGRVCPNAKYAMICDKQHWRVKRAKGVGLCLDESCFRGICNCQRMSGPPPAPVSAAVLDHILEAATFGNVRVVTPEGQPRPVPAPRVRPSANSSGDVKDPAPVPPVPKPRTKLATPNPTQAPIPAPRTRLQGASTQEPLASAGVASDSAPKWRVAKTVYSSAERFRTELVQRARSVGDVLVQALPLKTPAVQRYTMTLKMMRSRFSWHCDVWYPLAVIACLLPIWPSLALLLSFAIGLIPSVGNNVVLTALLVSSANYVASMDHQCEGAACLALLEEEHYYRAVRWRPITGALSLVLNLLGQVGYVARSTFDAAYVPCTVFDLCSFAILYLCRNRCWRCFGRCVRVGPATHVLGSTGQRVSKLALIDLCDHFSKPTIDVVGMATGWSGCYTGTAAMERQCASTVDPHSFDQKKAGATVYLTPPVNSGSALQCLNVMWKRPIGSTVLGEQTGAVVTAVKSISFSPPCCVSTTLPTRPGVTVVDHALYNRLTASGVDPALLRVGQGDFLKLNPGFRLIGGWIYGICYFVLVVVSTFTCLPIKCGIGTRDPFCRRVFSVPVTKTQEHCHAGMCASAEGISLDSLGLTQLQSYWIAAVTSGLVILLVCHRLAISALDLLTLASPLVLLVFPWASVGLLLACSLAGAAVKIQLLATLFVNLFFPQATLVTMGYWACVAALAVYSLMGLRVKVNVPMCVTPAHFLLLARSAGQSREQMLRVSAAAPTNSLLGVARDCYVTGTTRLYIPKEGGMVFEGLFRSPKARGNVGFVAGSSYGTGSVWTRNNEVVVLTASHVVGRANMATLKIGDAMLTLTFKKNGDFAEAVTTQSELPGNWPQLHFAQPTTGPASWCTATGDEEGLLSGEVCLAWTTSGDSGSAVVQGDAVVGVHTGSNTSGVAYVTTPSGKLLGADTVTLSSLSKHFTGPLTSIPKDIPDNIIADVDAVPRSLAMLIDGLSNRESSLSGPQLLLIACFMWSYLNQPAYLPYVLGFFAANFFLPKSVGRPVVTGLLWLCCLFTPLSMRLCLFHLVCATVTGNVISLWFYITAAGTSYLSEMWFGGYPTMLFVPRFLVYQFPGWAIGTVLAVCSITMLAAALGHTLLLDVFSASGRFDRTFMMKYFLEGGVKESVTASVTRAYGKPITQESLTATLAALTDDDFQFLSDVLDCRAVRSAMNLRAALTSFQVAQYRNILNASLQVDRDAARSRRLMAKLADFAVEQEVTAGDRVVVIDGLDRMAHFKDDLVLVPLTTKVVGGSRCTICDVVKEEANDTPVKPMPSRRRRKGLPKGAQLEWDRHQEEKRNAGDDDFAVSNDYVKRVPKYWDPSDTRGTTVKIAGTTYQKVVDYSGNVHYVEHQEDLLDYVLGKGSYEGLDQDKVLDLTNMLKVDPTELSSKDKAKARQLAHLLLDLANPVEAVNQLNLRAPHIFPGDVGRRTFADSKDKGFVALHSRTMFLAARDFLFNIKFVCDEEFTKTPKDTLLGYVRACPGYWFIFRRTHRSLIDAYWDSMECVYALPTISDFDVSPGDVAVTGERWDFESPGGGRAKRLTADLVHAFQGFHGASYSYDDKVAAAVSGDPYRSDGVLYNTRWGNIPYSVPTNALEATACYRAGCEAVTDGTNVIATIGPFPEQQPIPDIPKSVLDNCADISCDAFIAPAAETALCGDLEKYNLSTQGFVLPSVFSMVRAYLKEEIGDAPPLYLPSTVPSKNSQAGINGAEFPTKSLQSYCLIDDMVSQSMKSNLQTATMATCKRQYCSKYKIRSILGTNNYIGLGLRACLSGVTAAFQKAGKDGSPIYLGKSKFDPIPAPDKYCLETDLESCDRSTPALVRWFATNLIFELAGQPELVHSYVLNCCHDLVVAGSVAFTKRGGLSSGDPITSISNTIYSLVLYTQHMLLCGLEGYFPEIAEKYLDGSLELRDMFKYVRVYIYSDDVVLTTPNQHYAASFDRWVPHLQALLGFKVDPKKTVNTSSPSFLGCRFKQVDGKCYLASLQDRVTRSLLYHIGAKNPSEYYEAAVSIFKDSIICCDEDWWTDLHRRISGAARTDGVEFPTIEMLTSFRTKQYESAVCTVCGAAPVAKSACGGWFCGNCVPYHAGHCHTTSLFANCGHDIMYRSTYCTMCEGSPKQMVPKVPHPILDHLLCHIDYGSKEELTLVVADGRTTSPPGRYKVGHKVVAVVADVGGNIVFGCGPGSHIAVPLQDTLKGVVVNKALKNAAASEYVEGPPGSGKTFHLVKDVLAVVGSATLVVPTHASMLDCINKLKQAGADPYFVVPKYTVLDFPRPGSGNITVRLPQVGTSEGETFVDEVAYFSPVDLARILTQGRVKGYGDLNQLGCVGPASVPRNLWLRHFVSLEPLRVCHRFGAAVCDLIKGIYPYYEPAPHTTKVVFVPNPDFEKGVVITAYHKDRGLGHRTIDSIQGCTFPVVTLRLPTPQSLTRPRAVVAVTRASQELYIYDPFDQLSGLLKFTKEAEAQDLIHGPPTACHLGQEIDLWSNEGLEYYKEVNLLYTHVPIKDGVIHSYPNCGPACGWEKQSNKISCLPRVAQNLGYHYSPDLPGFCPIPKELAEHWPVVSNDRYPNCLQITLQQVCELSKPCSAGYMVGQSVFVQTPGVTSYWLTEWVDGKARALPDSLFSSGRFETNSRAFLDEAEEKFAAAHPHACLGEINKSTVGGSHFIFSQYLPPLLPADAVALVGASLAGKAAKAACSVVDVYAPSFEPYLHPETLSRVYKIMIDFKPCRLMVWRNATFYVQEGVDAVTSALAAVSKLIKVPANEPVSFHVASGYRTNALVAPQAKISIGAYAAEWALSTEPPPAGYAIVRRYIVKRLLSSTEVFLCRRGVVSSTSVQTICALEGCKPLFNFLQIGSVIGPV.

Residues 25-44 (CEHGAGLCCEVDGSTLCAEC) form a C4-type; atypical zinc finger. The Peptidase C31 domain occupies 66 to 156 (SPVPVGHKFL…PAANSLIVTT (91 aa)). In terms of domain architecture, Peptidase C32 spans 157–260 (DQEQDGFCWL…WSCLPAGNYG (104 aa)). Active-site for Nsp1 papain-like cysteine proteinase activity residues include Cys164 and His230. An OTU-like region spans residues 261–339 (GYNPPGDGAC…KQHWRVKRAK (79 aa)). The region spanning 261–360 (GYNPPGDGAC…RGICNCQRMS (100 aa)) is the Peptidase C33 domain. Cys270 (for Nsp2 cysteine proteinase activity) is an active-site residue. Cys319 provides a ligand contact to Zn(2+). The active-site For Nsp2 cysteine proteinase activity is His332. Zn(2+) contacts are provided by Cys349, Cys354, and Cys356. The segment at 386–451 (VVTPEGQPRP…TRLQGASTQE (66 aa)) is disordered. The next 7 membrane-spanning stretches (helical) occupy residues 530 to 550 (AVIACLLPIWPSLALLLSFAI), 551 to 571 (GLIPSVGNNVVLTALLVSSAN), 625 to 645 (FDAAYVPCTVFDLCSFAILYL), 829 to 849 (LIGGWIYGICYFVLVVVSTFT), 903 to 923 (YWIAAVTSGLVILLVCHRLAI), 935 to 955 (LVLLVFPWASVGLLLACSLAG), and 977 to 997 (LVTMGYWACVAALAVYSLMGL). An HD1 region spans residues 530-645 (AVIACLLPIW…DLCSFAILYL (116 aa)). The interval 829–997 (LIGGWIYGIC…ALAVYSLMGL (169 aa)) is HD2. Residues 1065–1268 (GLFRSPKARG…MLIDGLSNRE (204 aa)) enclose the Peptidase S32 domain. Active-site charge relay system; for 3C-like serine proteinase activity residues include His1103, Asp1129, and Ser1184. The next 4 helical transmembrane spans lie at 1291-1311 (AYLPYVLGFFAANFFLPKSVG), 1333-1353 (CLFHLVCATVTGNVISLWFYI), 1355-1375 (AAGTSYLSEMWFGGYPTMLFV), and 1385-1405 (GWAIGTVLAVCSITMLAAALG). The HD3 stretch occupies residues 1291–1405 (AYLPYVLGFF…SITMLAAALG (115 aa)). The N-linked (GlcNAc...) asparagine; by host glycan is linked to Asn1501. The segment at 1577-1614 (NDTPVKPMPSRRRRKGLPKGAQLEWDRHQEEKRNAGDD) is disordered. Basic and acidic residues predominate over residues 1600 to 1612 (EWDRHQEEKRNAG). The NiRAN domain maps to 1716 to 1883 (LANPVEAVNQ…DKVAAAVSGD (168 aa)). Positions 2116–2251 (KYCLETDLES…TTPNQHYAAS (136 aa)) constitute a RdRp catalytic domain. In terms of domain architecture, AV ZBD spans 2371–2438 (SAVCTVCGAA…SPKQMVPKVP (68 aa)). Zn(2+) contacts are provided by Cys2374, Cys2377, Cys2387, Cys2392, Cys2395, His2399, His2402, Cys2403, Cys2412, His2414, Cys2423, and Cys2426. In terms of domain architecture, (+)RNA virus helicase ATP-binding spans 2496 to 2661 (PGSHIAVPLQ…LRHFVSLEPL (166 aa)). Residue 2528–2535 (GPPGSGKT) coordinates ATP. The (+)RNA virus helicase C-terminal domain maps to 2662–2793 (RVCHRFGAAV…PPTACHLGQE (132 aa)). An AV-Nsp11N/CoV-Nsp15M domain is found at 2840-2930 (KISCLPRVAQ…LTEWVDGKAR (91 aa)). Positions 2932 to 3054 (LPDSLFSSGR…MVWRNATFYV (123 aa)) constitute a NendoU domain. Active-site residues include His2963, His2978, and Lys3007.

Belongs to the arteriviridae polyprotein family. As to quaternary structure, nsp1 interacts with cellular transcription cofactor SND1/p100. In terms of processing, specific enzymatic cleavages in vivo by its own proteases yield mature proteins. There are two alternative pathways for processing. Either nsp4-5 is cleaved, which represents the major pathway or the nsp5-6 and nsp6-7 are processed, which represents the minor pathway. The major pathway occurs when nsp2 acts as a cofactor for nsp4.

The protein resides in the host nucleus. The protein localises to the host cytoplasm. It localises to the host membrane. Its subcellular location is the host perinuclear region. It carries out the reaction RNA(n) + a ribonucleoside 5'-triphosphate = RNA(n+1) + diphosphate. The enzyme catalyses ATP + H2O = ADP + phosphate + H(+). It catalyses the reaction Thiol-dependent hydrolysis of ester, thioester, amide, peptide and isopeptide bonds formed by the C-terminal Gly of ubiquitin (a 76-residue protein attached to proteins as an intracellular targeting signal).. The catalysed reaction is uridylyl-uridylyl-ribonucleotide-RNA = a 3'-end uridylyl-2',3'-cyclophospho-uridine-RNA + a 5'-end dephospho-ribonucleoside-RNA. The replicase polyprotein 1ab is a multifunctional protein: it contains the activities necessary for the transcription of negative stranded RNA, leader RNA, subgenomic mRNAs and progeny virion RNA as well as proteinases responsible for the cleavage of the polyprotein into functional products. In terms of biological role, nsp1 is essential for viral subgenomic mRNA synthesis. Functionally, nsp2 cysteine proteinase which cleaves the nsp2/nsp3 site in the polyprotein. Also displays deubiquitinating and deISGylase activities. The deubiquitinating activity cleaves both ubiquitinated and ISGylated products and may therefore regulate ubiquitin and ISG15 dependent host innate immunity. Its function is as follows. The 3C-like serine proteinase chain is responsible for the majority of cleavages as it cleaves the C-terminus of the polyprotein. The helicase chain, which contains a zinc finger structure, displays RNA and DNA duplex-unwinding activities with 5' to 3' polarity. In terms of biological role, plays a role in viral transcription/replication and prevents the simultaneous activation of host cell dsRNA sensors, such as MDA5/IFIH1, OAS, and PKR. Acts by degrading the 5'-polyuridines generated during replication of the poly(A) region of viral genomic and subgenomic RNAs. Catalyzes a two-step reaction in which a 2'3'-cyclic phosphate (2'3'-cP) is first generated by 2'-O transesterification, which is then hydrolyzed to a 3'-phosphate (3'-P). If not degraded, poly(U) RNA would hybridize with poly(A) RNA tails and activate host dsRNA sensors. The polypeptide is Replicase polyprotein 1ab (rep) (Equidae (horses)).